The chain runs to 394 residues: Glycerol-1-phosphate dehydrogenase [NAD(P)+] (394 aa).

Residues Asp54, 116 to 120, and 138 to 141 each bind NAD(+); these read GTIHD and TAPS. Asp143 is a binding site for substrate. Ser147 lines the NAD(+) pocket. Residue Asp190 participates in substrate binding. Ni(2+) contacts are provided by Asp190 and His270. His274 provides a ligand contact to substrate. His290 contacts Ni(2+).

Belongs to the glycerol-1-phosphate dehydrogenase family. As to quaternary structure, homodimer. Ni(2+) is required as a cofactor.

It is found in the cytoplasm. It catalyses the reaction sn-glycerol 1-phosphate + NAD(+) = dihydroxyacetone phosphate + NADH + H(+). It carries out the reaction sn-glycerol 1-phosphate + NADP(+) = dihydroxyacetone phosphate + NADPH + H(+). Functionally, catalyzes the NAD(P)H-dependent reduction of dihydroxyacetonephosphate (DHAP or glycerone phosphate) to glycerol 1-phosphate (G1P). The G1P thus generated is probably used for the synthesis of phosphoglycerolipids in Gram-positive bacterial species. The chain is Glycerol-1-phosphate dehydrogenase [NAD(P)+] from Bacillus velezensis (strain DSM 23117 / BGSC 10A6 / LMG 26770 / FZB42) (Bacillus amyloliquefaciens subsp. plantarum).